The sequence spans 54 residues: Large ribosomal subunit protein eL37 (54 aa).

Positions 20, 23, 35, and 38 each coordinate Zn(2+). The C4-type zinc-finger motif lies at 20–38 (CRRCGHHTYNVRTKRCSHC).

Belongs to the eukaryotic ribosomal protein eL37 family. The cofactor is Zn(2+).

Binds to the 23S rRNA. The chain is Large ribosomal subunit protein eL37 (rpl37e) from Thermoplasma acidophilum (strain ATCC 25905 / DSM 1728 / JCM 9062 / NBRC 15155 / AMRC-C165).